Reading from the N-terminus, the 410-residue chain is Aspartate aminotransferase (410 aa).

Gly47, Trp135, and Asn185 together coordinate L-aspartate. Lys249 is subject to N6-(pyridoxal phosphate)lysine. Arg385 lines the L-aspartate pocket.

It belongs to the class-I pyridoxal-phosphate-dependent aminotransferase family. As to quaternary structure, homodimer. Pyridoxal 5'-phosphate serves as cofactor.

It is found in the cytoplasm. The catalysed reaction is L-aspartate + 2-oxoglutarate = oxaloacetate + L-glutamate. The enzyme catalyses L-2-aminoadipate + 2-oxoglutarate = 2-oxoadipate + L-glutamate. In terms of biological role, catalyzes the reversible conversion of aspartate and 2-oxoglutarate to glutamate and oxaloacetate. Genetic evidence shows that this protein is involved in L-lysine catabolism. It may have 2-aminoadipate:2-oxoglutarate aminotransferase activity. In Rhizobium meliloti (strain 1021) (Ensifer meliloti), this protein is Aspartate aminotransferase (aatB).